Consider the following 465-residue polypeptide: 2-methylcitrate synthase, mitochondrial (465 aa).

The N-terminal 29 residues, 1–29 (MAMTMRSTRHASKLAQTARLALTNSRRYS), are a transit peptide targeting the mitochondrion. Residues Arg74 and Lys192 each coordinate CoA. His269 serves as a coordination point for oxaloacetate. Residue Leu304 participates in CoA binding. His305 is a catalytic residue. CoA contacts are provided by Val346, Gly348, and Tyr349. The oxaloacetate site is built by His351 and Arg360. His351 is a catalytic residue. 3 residues coordinate CoA: Thr400, Lys401, and Asn406. Residue Asp408 is part of the active site. Arg434 and Arg454 together coordinate oxaloacetate.

The protein belongs to the citrate synthase family. As to quaternary structure, homodimer.

The protein resides in the mitochondrion matrix. It carries out the reaction propanoyl-CoA + oxaloacetate + H2O = (2S,3S)-2-methylcitrate + CoA + H(+). The enzyme catalyses oxaloacetate + acetyl-CoA + H2O = citrate + CoA + H(+). It functions in the pathway organic acid metabolism; propanoate degradation. In terms of biological role, component of the methylcitrate cycle that catalyzes the synthesis of (2S,3S)-2-methylcitrate from propionyl-CoA and oxaloacetate. Plays an important role in detoxification of propionyl-CoA, an inhibitor of both primary and secondary metabolism. Also has citrate synthase activity using as substrates acetyl-CoA and oxaloacetate. Plays a key role in the estabishment of invasive pulmonary aspergillosis. The polypeptide is 2-methylcitrate synthase, mitochondrial (Aspergillus fumigatus (strain CBS 144.89 / FGSC A1163 / CEA10) (Neosartorya fumigata)).